We begin with the raw amino-acid sequence, 393 residues long: Acetate kinase (393 aa).

Residue N6 coordinates Mg(2+). Residue K13 coordinates ATP. Substrate is bound at residue R87. The active-site Proton donor/acceptor is the D143. Residues H203 to G207, D278 to R280, and G326 to N330 contribute to the ATP site. E380 is a binding site for Mg(2+).

The protein belongs to the acetokinase family. Homodimer. Mg(2+) is required as a cofactor. Mn(2+) serves as cofactor.

It localises to the cytoplasm. It carries out the reaction acetate + ATP = acetyl phosphate + ADP. It functions in the pathway metabolic intermediate biosynthesis; acetyl-CoA biosynthesis; acetyl-CoA from acetate: step 1/2. Catalyzes the formation of acetyl phosphate from acetate and ATP. Can also catalyze the reverse reaction. This Mycoplasma capricolum subsp. capricolum (strain California kid / ATCC 27343 / NCTC 10154) protein is Acetate kinase.